The chain runs to 214 residues: Adenylate kinase (214 aa).

10-15 serves as a coordination point for ATP; that stretch reads GAGKGT. Residues 30–59 are NMP; sequence STGDIFRANIKNGTELGKKAKTYMDQGALV. AMP contacts are provided by residues threonine 31, arginine 36, 57-59, 85-88, and glutamine 92; these read ALV and GFPR. Residues 126-163 are LID; sequence GRRACLNCGATYHIVFNPTKVEGKCDACGADTVLRDDD. Arginine 127 contacts ATP. Cysteine 130 and cysteine 133 together coordinate Zn(2+). An ATP-binding site is contributed by 136–137; that stretch reads TY. Zn(2+) is bound by residues cysteine 150 and cysteine 153. Arginine 160 and arginine 171 together coordinate AMP. Lysine 199 lines the ATP pocket.

It belongs to the adenylate kinase family. In terms of assembly, monomer.

The protein resides in the cytoplasm. The catalysed reaction is AMP + ATP = 2 ADP. Its pathway is purine metabolism; AMP biosynthesis via salvage pathway; AMP from ADP: step 1/1. Functionally, catalyzes the reversible transfer of the terminal phosphate group between ATP and AMP. Plays an important role in cellular energy homeostasis and in adenine nucleotide metabolism. This chain is Adenylate kinase, found in Agathobacter rectalis (strain ATCC 33656 / DSM 3377 / JCM 17463 / KCTC 5835 / VPI 0990) (Eubacterium rectale).